A 240-amino-acid chain; its full sequence is uncharacterized protein (240 aa).

2 consecutive transmembrane segments (helical) span residues 16-36 (AVFFLYAALAIIGFAIGYFIP) and 67-87 (FITALLGMCAGIWFAHSVIAM).

The protein localises to the cell membrane. This is an uncharacterized protein from Bacillus subtilis (strain 168).